Reading from the N-terminus, the 208-residue chain is MKIVEVKHPLVKHKLGLMREQDISTKRFRELASEVGSLLTYEATADLETEKVTIEGWNGPVEIDQIKGKKITVVPILRAGLGMMDGVLENVPSARISVVGMYRNEETLEPVPYFQKLVSNIDERMALIVDPMLATGGSVIATIDLLKKAGCSSIKVLVLVAAPEGIAALEKAHPDVELYTASIDQGLNEHGYIIPGLGDAGDKIFGTK.

5-phospho-alpha-D-ribose 1-diphosphate-binding positions include arginine 78, arginine 103, and 130–138 (DPMLATGGS). Uracil is bound by residues isoleucine 193 and 198 to 200 (GDA). Aspartate 199 contributes to the 5-phospho-alpha-D-ribose 1-diphosphate binding site.

Belongs to the UPRTase family. It depends on Mg(2+) as a cofactor.

It catalyses the reaction UMP + diphosphate = 5-phospho-alpha-D-ribose 1-diphosphate + uracil. It participates in pyrimidine metabolism; UMP biosynthesis via salvage pathway; UMP from uracil: step 1/1. Its activity is regulated as follows. Allosterically activated by GTP. Its function is as follows. Catalyzes the conversion of uracil and 5-phospho-alpha-D-ribose 1-diphosphate (PRPP) to UMP and diphosphate. The sequence is that of Uracil phosphoribosyltransferase from Escherichia coli O139:H28 (strain E24377A / ETEC).